Here is a 777-residue protein sequence, read N- to C-terminus: 1,4-alpha-glucan branching enzyme GlgB (777 aa).

Asp-408 (nucleophile) is an active-site residue. The active-site Proton donor is Glu-461.

This sequence belongs to the glycosyl hydrolase 13 family. GlgB subfamily. As to quaternary structure, monomer.

It catalyses the reaction Transfers a segment of a (1-&gt;4)-alpha-D-glucan chain to a primary hydroxy group in a similar glucan chain.. It participates in glycan biosynthesis; glycogen biosynthesis. In terms of biological role, catalyzes the formation of the alpha-1,6-glucosidic linkages in glycogen by scission of a 1,4-alpha-linked oligosaccharide from growing alpha-1,4-glucan chains and the subsequent attachment of the oligosaccharide to the alpha-1,6 position. This is 1,4-alpha-glucan branching enzyme GlgB from Actinobacillus pleuropneumoniae serotype 3 (strain JL03).